The sequence spans 155 residues: Aspartate carbamoyltransferase regulatory chain (155 aa).

4 residues coordinate Zn(2+): cysteine 113, cysteine 118, cysteine 139, and cysteine 142.

Belongs to the PyrI family. Contains catalytic and regulatory chains. It depends on Zn(2+) as a cofactor.

In terms of biological role, involved in allosteric regulation of aspartate carbamoyltransferase. This is Aspartate carbamoyltransferase regulatory chain from Methanoculleus marisnigri (strain ATCC 35101 / DSM 1498 / JR1).